An 888-amino-acid polypeptide reads, in one-letter code: Valine--tRNA ligase (888 aa).

The 'HIGH' region signature appears at 43 to 53 (PNVTGTLHLGH). Positions 538-542 (KMSKS) match the 'KMSKS' region motif. Residue Lys541 participates in ATP binding. The stretch at 821-888 (LIDLDAERAR…RLKAALGRLA (68 aa)) forms a coiled coil.

This sequence belongs to the class-I aminoacyl-tRNA synthetase family. ValS type 1 subfamily. Monomer.

It localises to the cytoplasm. It carries out the reaction tRNA(Val) + L-valine + ATP = L-valyl-tRNA(Val) + AMP + diphosphate. Its function is as follows. Catalyzes the attachment of valine to tRNA(Val). As ValRS can inadvertently accommodate and process structurally similar amino acids such as threonine, to avoid such errors, it has a 'posttransfer' editing activity that hydrolyzes mischarged Thr-tRNA(Val) in a tRNA-dependent manner. This chain is Valine--tRNA ligase, found in Gluconobacter oxydans (strain 621H) (Gluconobacter suboxydans).